The primary structure comprises 158 residues: Cytochrome c2 (158 aa).

Pyrrolidone carboxylic acid is present on glutamine 1. Residues cysteine 18, cysteine 21, histidine 22, and methionine 102 each contribute to the heme c site. A disordered region spans residues 129–158 (AEAAPAADAAAPAAADAAAPAEPAAEGAAT).

It belongs to the cytochrome c family. Post-translationally, binds 1 heme c group covalently per subunit.

The protein localises to the periplasm. In terms of biological role, cytochrome c2 is found mainly in purple, non-sulfur, photosynthetic bacteria where it functions as the electron donor to the oxidized bacteriochlorophyll in the photophosphorylation pathway. However, it may also have a role in the respiratory chain and is found in some non-photosynthetic bacteria. In Fuscovulum blasticum (Rhodobacter blasticus), this protein is Cytochrome c2.